We begin with the raw amino-acid sequence, 332 residues long: D-2-hydroxyacid dehydrogenase (NAD(+)) (332 aa).

Catalysis depends on residues R237 and E266. H298 (proton donor) is an active-site residue.

This sequence belongs to the D-isomer specific 2-hydroxyacid dehydrogenase family. Monomer.

It carries out the reaction a (2R)-2-hydroxycarboxylate + NAD(+) = a 2-oxocarboxylate + NADH + H(+). It catalyses the reaction (2R)-hydroxy-4-methylpentanoate + NAD(+) = 4-methyl-2-oxopentanoate + NADH + H(+). It functions in the pathway amino-acid degradation; L-leucine degradation. Functionally, involved in the reductive branch of L-leucine fermentation. Catalyzes the NADH-dependent reduction of 4-methyl-2-oxopentanoate (2-oxoisocaproate) to (R)-2-hydroxy-4-methylpentanoate ((R)-2-hydroxyisocaproate). For the reverse reaction, the enzyme accepts (R)- but not (S)-2-hydroxy-4-methylpentanoate. Can also use 2-oxopentanoate, 2-oxohexanoate and phenylpyruvate but not 2-oxoisovalerate and 2-oxobutyrate. Cannot use NADPH. The sequence is that of D-2-hydroxyacid dehydrogenase (NAD(+)) from Clostridioides difficile (Peptoclostridium difficile).